We begin with the raw amino-acid sequence, 1109 residues long: Protein argonaute 3 (1109 aa).

A compositionally biased stretch (basic and acidic residues) spans 1–13 (MAGRGGRDPRRGY). 2 disordered regions span residues 1–83 (MAGR…GLVR) and 125–220 (DHRD…PLSK). Composition is skewed to gly residues over residues 14–30 (DGGY…GGTN), 37–54 (RGGG…GGRG), and 62–83 (DVLG…GLVR). Basic and acidic residues predominate over residues 125 to 134 (DHRDQHDHQS). Basic residues predominate over residues 135–161 (QRHHHRHHHHQRQRHHHHHQRQQRRGS). The 111-residue stretch at 411–521 (SVLDLVKTMK…VPIEFCNIPE (111 aa)) folds into the PAZ domain. The segment covering 527–545 (VARLDDKKSDNKGEQEKPS) has biased composition (basic and acidic residues). The interval 527-548 (VARLDDKKSDNKGEQEKPSTKT) is disordered. One can recognise a Piwi domain in the interval 720-1023 (LLFCPMLNRC…AAYRGRLYYE (304 aa)).

This sequence belongs to the argonaute family. Ago subfamily.

Its function is as follows. Probably involved in the RNA silencing pathway. May bind to short RNAs such as microRNAs (miRNAs) or short interfering RNAs (siRNAs), and represses the translation of mRNAs which are complementary to them. The sequence is that of Protein argonaute 3 (AGO3) from Oryza sativa subsp. japonica (Rice).